An 89-amino-acid polypeptide reads, in one-letter code: Small ribosomal subunit protein uS14A (89 aa).

Belongs to the universal ribosomal protein uS14 family. In terms of assembly, part of the 30S ribosomal subunit. Contacts proteins S3 and S10.

In terms of biological role, binds 16S rRNA, required for the assembly of 30S particles and may also be responsible for determining the conformation of the 16S rRNA at the A site. In Lacticaseibacillus paracasei (strain ATCC 334 / BCRC 17002 / CCUG 31169 / CIP 107868 / KCTC 3260 / NRRL B-441) (Lactobacillus paracasei), this protein is Small ribosomal subunit protein uS14A.